Here is a 219-residue protein sequence, read N- to C-terminus: MAKIQRVTEANLPTEFGMFRIVGFEFPDTKKEHVALVLGEVENTDEPILARIHSECLTGDALYSLKCDCGFQLAAALRQISQEGRGVLIYHREEGRGIGLINKIRAYSLQDKGMDTIEANLALGFAADERNFEVCADIFALLGINKVRLLTNNPNKIDTMKKAGINIVERVALNVGENRYNTEYLDTKAKKMGHFIIHNQQKYPLECPYCSEEVPVQEK.

51 to 55 (RIHSE) serves as a coordination point for GTP. The Zn(2+) site is built by C56, C67, and C69. GTP contacts are provided by residues Q72, 94 to 96 (EGR), and T116. D128 functions as the Proton acceptor in the catalytic mechanism. The Nucleophile role is filled by R130. GTP is bound by residues T151 and K156.

Belongs to the GTP cyclohydrolase II family. Zn(2+) is required as a cofactor.

It carries out the reaction GTP + 4 H2O = 2,5-diamino-6-hydroxy-4-(5-phosphoribosylamino)-pyrimidine + formate + 2 phosphate + 3 H(+). It participates in cofactor biosynthesis; riboflavin biosynthesis; 5-amino-6-(D-ribitylamino)uracil from GTP: step 1/4. Functionally, catalyzes the conversion of GTP to 2,5-diamino-6-ribosylamino-4(3H)-pyrimidinone 5'-phosphate (DARP), formate and pyrophosphate. This chain is GTP cyclohydrolase-2, found in Pasteurella multocida (strain Pm70).